The chain runs to 263 residues: Chymotrypsinogen B2 (263 aa).

A signal peptide spans 1 to 18 (MAFLWLLSCWALLGTTFG). Disulfide bonds link cysteine 19–cysteine 140, cysteine 60–cysteine 76, cysteine 154–cysteine 219, cysteine 186–cysteine 200, and cysteine 209–cysteine 238. One can recognise a Peptidase S1 domain in the interval 34–261 (IVNGEDAVPG…LIPWVQKILA (228 aa)). Catalysis depends on charge relay system residues histidine 75 and aspartate 120. Catalysis depends on serine 213, which acts as the Charge relay system.

Belongs to the peptidase S1 family.

It localises to the secreted. The protein localises to the extracellular space. It carries out the reaction Preferential cleavage: Tyr-|-Xaa, Trp-|-Xaa, Phe-|-Xaa, Leu-|-Xaa.. This Homo sapiens (Human) protein is Chymotrypsinogen B2 (CTRB2).